We begin with the raw amino-acid sequence, 822 residues long: MATPRGRTKKKASFDHSPDSLPLRSSGRQAKKKATETTDEDEDGGSEKKYRKCEKAGCTATCPVCFASASERCAKNGYTSRWYHLSCGEHFCNECFDHYYRSHKDGYDKYTTWKKIWTSNGKTEPSPKAFMADQQLPYWVQCTKPECRKWRQLTKEIQLTPQIAKTYRCGMKPNTAIKPETSDHCSLPEDLRVLEVSNHWWYSMLILPPLLKDSVAAPLLSAYYPDCVGMSPSCTSTNRAAATGNASPGKLEHSKAALSVHVPGMNRYFQPFYQPNECGKALCVRPDVMELDELYEFPEYSRDPTMYLALRNLILALWYTNCKEALTPQKCIPHIIVRGLVRIRCVQEVERILYFMTRKGLINTGVLSVGADQYLLPKDYHNKSVIIIGAGPAGLAAARQLHNFGIKVTVLEAKDRIGGRVWDDKSFKGVTVGRGAQIVNGCINNPVALMCEQLGISMHKFGERCDLIQEGGRITDPTIDKRMDFHFNALLDVVSEWRKDKTQLQDVPLGEKIEEIYKAFIKESGIQFSELEGQVLQFHLSNLEYACGSNLHQVSARSWDHNEFFAQFAGDHTLLTPGYSVIIEKLAEGLDIQLKSPVQCIDYSGDEVQVTTTDGTGYSAQKVLVTVPLALLQKGAIQFNPPLSEKKMKAINSLGAGIIEKIALQFPYRFWDSKVQGADFFGHVPPSASKRGLFAVFYDMDPQKKHSVLMSVIAGEAVASVRTLDDKQVLQQCMATLRELFKEQEVPDPTKYFVTRWSTDPWIQMAYSFVKTGGSGEAYDIIAEDIQGTVFFAGEATNRHFPQTVTGAYLSGVREASKIAAF.

A compositionally biased stretch (basic residues) spans 1 to 11; the sequence is MATPRGRTKKK. Positions 1–47 are disordered; that stretch reads MATPRGRTKKKASFDHSPDSLPLRSSGRQAKKKATETTDEDEDGGSE. Phosphoserine is present on residues S13, S17, and S26. Zn(2+) contacts are provided by C53, C58, C65, C73, H84, H90, C92, C95, C142, C147, C169, and C185. A CW-type zinc finger spans residues 133 to 193; the sequence is DQQLPYWVQC…HCSLPEDLRV (61 aa). S247 carries the phosphoserine modification. Positions 273 to 292 are GLYR1-binding; the sequence is YQPNECGKALCVRPDVMELD. One can recognise an SWIRM domain in the interval 275–373; that stretch reads PNECGKALCV…TGVLSVGADQ (99 aa). 383–439 contacts FAD; sequence KSVIIIGAGPAGLAAARQLHNFGIKVTVLEAKDRIGGRVWDDKSFKGVTVGRGAQIV. Histone H3-binding stretches follow at residues 438–467, 487–498, and 538–572; these read IVNGCINNPVALMCEQLGISMHKFGERCDL, FNALLDVVSEWR, and FHLSNLEYACGSNLHQVSARSWDHNEFFAQFAGDH. A GLYR1-binding region spans residues 564-566; sequence FFA. FAD contacts are provided by residues V598, E795, and 803–805; that span reads QTV. Positions 798 to 814 are GLYR1-binding; sequence NRHFPQTVTGAYLSGVR.

Belongs to the flavin monoamine oxidase family. In terms of assembly, interacts with its cofactor GLYR1 at nucleosomes; this interaction stimulates H3K4me1 and H3K4me2 demethylation. In contrast to KDM1A, does not form a complex with RCOR1/CoREST. Possible accessory component of the polycomb repressive deubiquitinase (PR-DUB) complex, at least composed of BAP1, one of ASXL1, ASXL2 or (probably) ASXL3 and one of MBD5 or MBD6. The PR-DUB core associates with a number of accessory proteins, including FOXK1, FOXK2, KDM1B, HCFC1 and OGT; KDM1B specifically associates with ASXL2 PR-DUB complexes. It depends on FAD as a cofactor. The cofactor is Zn(2+).

The protein resides in the nucleus. Its subcellular location is the chromosome. It carries out the reaction N(6),N(6)-dimethyl-L-lysyl(4)-[histone H3] + 2 A + 2 H2O = L-lysyl(4)-[histone H3] + 2 formaldehyde + 2 AH2. The enzyme catalyses N(6)-methyl-L-lysyl(4)-[histone H3] + A + H2O = L-lysyl(4)-[histone H3] + formaldehyde + AH2. Histone H3K4me1 and H3K4me2 demethylase activity is inhibited by DNA, this inhibition is released in complex with GLYR1. Its function is as follows. Histone demethylase that demethylates 'Lys-4' of histone H3, a specific tag for epigenetic transcriptional activation, thereby acting as a corepressor. Required for de novo DNA methylation of a subset of imprinted genes during oogenesis. Acts by oxidizing the substrate by FAD to generate the corresponding imine that is subsequently hydrolyzed. Demethylates both mono- and di-methylated 'Lys-4' of histone H3. Has no effect on tri-methylated 'Lys-4', mono-, di- or tri-methylated 'Lys-9', mono-, di- or tri-methylated 'Lys-27', mono-, di- or tri-methylated 'Lys-36' of histone H3, or on mono-, di- or tri-methylated 'Lys-20' of histone H4. Alone, it is unable to demethylate H3K4me on nucleosomes and requires the presence of GLYR1 to achieve such activity, they form a multifunctional enzyme complex that modifies transcribed chromatin and facilitates Pol II transcription through nucleosomes. This chain is Lysine-specific histone demethylase 2, found in Homo sapiens (Human).